The chain runs to 291 residues: Probable endonuclease 4 (291 aa).

Positions 72, 112, 147, 181, 184, 215, 228, 230, and 260 each coordinate Zn(2+).

It belongs to the AP endonuclease 2 family. It depends on Zn(2+) as a cofactor.

It carries out the reaction Endonucleolytic cleavage to 5'-phosphooligonucleotide end-products.. In terms of biological role, endonuclease IV plays a role in DNA repair. It cleaves phosphodiester bonds at apurinic or apyrimidinic (AP) sites, generating a 3'-hydroxyl group and a 5'-terminal sugar phosphate. In Mycoplasma genitalium (strain ATCC 33530 / DSM 19775 / NCTC 10195 / G37) (Mycoplasmoides genitalium), this protein is Probable endonuclease 4.